The chain runs to 236 residues: 27 kDa hemolymph protein (236 aa).

Residues 1–17 (MMWKLIIVTILAVGVLC) form the signal peptide.

In terms of assembly, monomer. In terms of tissue distribution, hemolymph.

The protein localises to the secreted. The polypeptide is 27 kDa hemolymph protein (Galleria mellonella (Greater wax moth)).